Consider the following 289-residue polypeptide: MAAETASGYIQHHLQNLTYGQLPDGSWGFAHSAAEAKAMGFWAFHLDTLGWSVALGLIFLFIFRMAAKKATSGQPGGLQNFVEVMVDFVNGSVKDSFHGRSPVIAPLALTIFVWVFLMNAVDLVPVDWIPQLAILISGDPHIPFRAVSTTDPNATLAMAFCVFALIIFYSIKVKGLGGFIGELTLHPFGSKNIFVQILLIPVNFLLEFVTLIAKPISLALRLFGNMYAGELVFILIAVMFGSGLLWLSGLGVVLQWAWAVFHILIITLQAFIFMMLTIVYLSMAHEDNH.

6 helical membrane passes run 43–63, 103–123, 160–180, 193–213, 232–252, and 259–279; these read AFHL…LFIF, VIAP…AVDL, FCVF…GGFI, IFVQ…TLIA, VFIL…GLGV, and AVFH…LTIV.

This sequence belongs to the ATPase A chain family. In terms of assembly, F-type ATPases have 2 components, CF(1) - the catalytic core - and CF(0) - the membrane proton channel. CF(1) has five subunits: alpha(3), beta(3), gamma(1), delta(1), epsilon(1). CF(0) has three main subunits: a(1), b(2) and c(9-12). The alpha and beta chains form an alternating ring which encloses part of the gamma chain. CF(1) is attached to CF(0) by a central stalk formed by the gamma and epsilon chains, while a peripheral stalk is formed by the delta and b chains.

It localises to the cell inner membrane. Key component of the proton channel; it plays a direct role in the translocation of protons across the membrane. The protein is ATP synthase subunit a of Pseudomonas putida (strain GB-1).